The sequence spans 70 residues: Small ribosomal subunit protein bS21B (70 aa).

This sequence belongs to the bacterial ribosomal protein bS21 family.

The protein is Small ribosomal subunit protein bS21B of Rhizobium etli (strain ATCC 51251 / DSM 11541 / JCM 21823 / NBRC 15573 / CFN 42).